The primary structure comprises 241 residues: Pre-rRNA-processing protein pno1 (241 aa).

Residues 48–71 (APAKTSAEKKRGAKPQMRRVPIPP) form a disordered region. Threonine 52 carries the phosphothreonine modification. A KH domain is found at 162–214 (GDHLSRAIGRIAGQGGKTKFAIENASRTRIVLADSKIHILGGFTNIRIAKDAV).

This sequence belongs to the PNO1 family. Component of the small ribosomal subunit, ribosomal RNA processing complex (SSU RRP complex).

Its subcellular location is the cytoplasm. The protein resides in the nucleus. It localises to the nucleolus. In terms of biological role, required for small ribosomal subunit (SSU) synthesis. Has a role in the processing of early nucleolar and late cytoplasmic pre-RNA species. This chain is Pre-rRNA-processing protein pno1 (rbp28), found in Schizosaccharomyces pombe (strain 972 / ATCC 24843) (Fission yeast).